The sequence spans 245 residues: 4-hydroxy-tetrahydrodipicolinate reductase (245 aa).

Residues 7 to 12 (GAKGKV), 75 to 77 (GTT), and 102 to 105 (APNF) each bind NAD(+). Residue histidine 132 is the Proton donor/acceptor of the active site. (S)-2,3,4,5-tetrahydrodipicolinate is bound at residue histidine 133. The active-site Proton donor is lysine 136. (S)-2,3,4,5-tetrahydrodipicolinate is bound at residue 142–143 (GT).

Belongs to the DapB family.

The protein localises to the cytoplasm. The catalysed reaction is (S)-2,3,4,5-tetrahydrodipicolinate + NAD(+) + H2O = (2S,4S)-4-hydroxy-2,3,4,5-tetrahydrodipicolinate + NADH + H(+). It catalyses the reaction (S)-2,3,4,5-tetrahydrodipicolinate + NADP(+) + H2O = (2S,4S)-4-hydroxy-2,3,4,5-tetrahydrodipicolinate + NADPH + H(+). It functions in the pathway amino-acid biosynthesis; L-lysine biosynthesis via DAP pathway; (S)-tetrahydrodipicolinate from L-aspartate: step 4/4. Catalyzes the conversion of 4-hydroxy-tetrahydrodipicolinate (HTPA) to tetrahydrodipicolinate. The sequence is that of 4-hydroxy-tetrahydrodipicolinate reductase from Mycobacterium bovis (strain ATCC BAA-935 / AF2122/97).